Here is a 103-residue protein sequence, read N- to C-terminus: Seminal ribonuclease (103 aa).

Disulfide bonds link cysteine 12–cysteine 70, cysteine 26–cysteine 81, cysteine 44–cysteine 96, and cysteine 51–cysteine 58. Substrate-binding positions include 27–31, lysine 52, and arginine 71; that span reads KLVNT.

It belongs to the pancreatic ribonuclease family. Homodimer; disulfide-linked.

The protein resides in the secreted. It carries out the reaction an [RNA] containing cytidine + H2O = an [RNA]-3'-cytidine-3'-phosphate + a 5'-hydroxy-ribonucleotide-3'-[RNA].. The enzyme catalyses an [RNA] containing uridine + H2O = an [RNA]-3'-uridine-3'-phosphate + a 5'-hydroxy-ribonucleotide-3'-[RNA].. This enzyme hydrolyzes both single- and double-stranded RNA. The sequence is that of Seminal ribonuclease (SRN) from Cephalophus silvicultor (Yellow-backed duiker).